The primary structure comprises 123 residues: MAWTPLLLLFLSHCTGSLSQAVLTQPSSLSASPGASASLTCTLCSGINVGTYRIYWYQQKPGSPPQYLLRYKSDSDKQQGSGVPSRFSGSKDASANAGILLISGLQSEDEADYYCMIWHSSAS.

Positions 1 to 19 (MAWTPLLLLFLSHCTGSLS) are cleaved as a signal peptide. A framework-1 region spans residues 20–44 (QAVLTQPSSLSASPGASASLTCTLC). The Ig-like domain maps to 20–123 (QAVLTQPSSL…YCMIWHSSAS (104 aa)). Cysteines 41 and 115 form a disulfide. Residues 45 to 53 (SGINVGTYR) are complementarity-determining-1. The tract at residues 54-70 (IYWYQQKPGSPPQYLLR) is framework-2. Residues 68–92 (LLRYKSDSDKQQGSGVPSRFSGSKD) are disordered. Residues 71–77 (YKSDSDK) form a complementarity-determining-2 region. Over residues 78-92 (QQGSGVPSRFSGSKD) the composition is skewed to polar residues. The interval 78–115 (QQGSGVPSRFSGSKDASANAGILLISGLQSEDEADYYC) is framework-3. Residues 116-123 (MIWHSSAS) are complementarity-determining-3.

As to quaternary structure, immunoglobulins are composed of two identical heavy chains and two identical light chains; disulfide-linked.

It is found in the secreted. Its subcellular location is the cell membrane. V region of the variable domain of immunoglobulin light chains that participates in the antigen recognition. Immunoglobulins, also known as antibodies, are membrane-bound or secreted glycoproteins produced by B lymphocytes. In the recognition phase of humoral immunity, the membrane-bound immunoglobulins serve as receptors which, upon binding of a specific antigen, trigger the clonal expansion and differentiation of B lymphocytes into immunoglobulins-secreting plasma cells. Secreted immunoglobulins mediate the effector phase of humoral immunity, which results in the elimination of bound antigens. The antigen binding site is formed by the variable domain of one heavy chain, together with that of its associated light chain. Thus, each immunoglobulin has two antigen binding sites with remarkable affinity for a particular antigen. The variable domains are assembled by a process called V-(D)-J rearrangement and can then be subjected to somatic hypermutations which, after exposure to antigen and selection, allow affinity maturation for a particular antigen. This Homo sapiens (Human) protein is Immunoglobulin lambda variable 5-45.